The sequence spans 202 residues: Transcription antitermination protein NusB (202 aa).

The span at 1–11 shows a compositional bias: basic and acidic residues; it reads MTEERTADNKA. Disordered stretches follow at residues 1-21 and 169-202; these read MTEERTADNKAAKAASFKRHG and SAAKRAEQAEQPGQAESDELDGLLDGVVQESDEA.

The protein belongs to the NusB family.

Its function is as follows. Involved in transcription antitermination. Required for transcription of ribosomal RNA (rRNA) genes. Binds specifically to the boxA antiterminator sequence of the ribosomal RNA (rrn) operons. This is Transcription antitermination protein NusB from Corynebacterium jeikeium (strain K411).